Reading from the N-terminus, the 593-residue chain is tRNA (guanine(26)-N(2))-dimethyltransferase 1 (593 aa).

A Trm1 methyltransferase domain is found at 9–465 (TVIKEGEAEV…APMEIIWDIM (457 aa)). Arg-36 is an S-adenosyl-L-methionine binding site. Residues 56 to 118 (AMLSKRARSS…KTAYESARRE (63 aa)) are disordered. Composition is skewed to basic and acidic residues over residues 68-81 (VVEK…KEET) and 88-118 (DNGK…ARRE). S-adenosyl-L-methionine-binding residues include Arg-134, Asp-152, and Val-185. Residues Cys-315, Cys-318, Cys-350, and Cys-353 each coordinate Zn(2+). The disordered stretch occupies residues 546 to 593 (VNGHLNNNHKEAGDEEEEEEEEEPEEDIIEGEPELKRQKTTEDFASTS). Positions 558 to 577 (GDEEEEEEEEEPEEDIIEGE) are enriched in acidic residues. Residues 578–587 (PELKRQKTTE) are compositionally biased toward basic and acidic residues.

It belongs to the class I-like SAM-binding methyltransferase superfamily. Trm1 family.

It catalyses the reaction guanosine(26) in tRNA + 2 S-adenosyl-L-methionine = N(2)-dimethylguanosine(26) in tRNA + 2 S-adenosyl-L-homocysteine + 2 H(+). Its function is as follows. Dimethylates a single guanine residue at position 26 of most tRNAs using S-adenosyl-L-methionine as donor of the methyl groups. The sequence is that of tRNA (guanine(26)-N(2))-dimethyltransferase 1 from Arabidopsis thaliana (Mouse-ear cress).